A 269-amino-acid chain; its full sequence is Zinc transporter ZupT (269 aa).

A run of 8 helical transmembrane segments spans residues 11–31 (IALA…LLVL), 40–60 (LLAF…LSEI), 80–100 (YGTL…HFIP), 125–145 (ALLT…ATFF), 158–178 (AFAI…PVYF), 187–207 (FSAS…GYWL), 217–237 (FGWV…DELL), and 249–269 (TVYG…LFKW). 2 residues coordinate Fe(2+): asparagine 136 and glutamate 139. Zn(2+) contacts are provided by glutamate 139 and histidine 164. Fe(2+)-binding residues include asparagine 165, glutamate 168, and glutamate 197. Residue glutamate 168 coordinates Zn(2+).

Belongs to the ZIP transporter (TC 2.A.5) family. ZupT subfamily.

The protein localises to the cell inner membrane. It catalyses the reaction Zn(2+)(in) = Zn(2+)(out). Mediates zinc uptake. May also transport other divalent cations. This Stenotrophomonas maltophilia (strain K279a) protein is Zinc transporter ZupT.